The sequence spans 244 residues: uncharacterized protein (244 aa).

The signal sequence occupies residues 1–18 (MQFSVLCKFLLLVTAVMA). Residues 19–223 (QTEYTPGFTT…TTIPSSAVHY (205 aa)) lie on the Lumenal side of the membrane. 2 stretches are compositionally biased toward low complexity: residues 55 to 65 (ETSTHSVTSTN) and 75 to 128 (TSHN…TTHV). Positions 55–128 (ETSTHSVTST…TTVVPPTTHV (74 aa)) are disordered. The helical transmembrane segment at 224–244 (ASPSGLLALVVMLISAFAFLA) threads the bilayer.

Its subcellular location is the endoplasmic reticulum membrane. This is an uncharacterized protein from Schizosaccharomyces pombe (strain 972 / ATCC 24843) (Fission yeast).